An 82-amino-acid polypeptide reads, in one-letter code: Envelope small membrane protein (82 aa).

The Virion surface segment spans residues 1–16; the sequence is MVDLFFNDTAWYIGQI. Residues 17–37 traverse the membrane as a helical segment; it reads LVLVLFCLISLIFVVAFLATI. Residues 38-79 are Intravirion-facing; sequence KLCMQLCGFCNFFIISPSAYVYKRGMQLYKSYSEQVIPPTSD.

It belongs to the betacoronaviruses E protein family. Homopentamer. Interacts with membrane protein M in the budding compartment of the host cell, which is located between endoplasmic reticulum and the Golgi complex. Interacts with Nucleoprotein.

It localises to the host Golgi apparatus membrane. In terms of biological role, plays a central role in virus morphogenesis and assembly. Acts as a viroporin and self-assembles in host membranes forming pentameric protein-lipid pores that allow ion transport. Also plays a role in the induction of apoptosis. The polypeptide is Envelope small membrane protein (Human coronavirus HKU1 (isolate N1) (HCoV-HKU1)).